The following is a 321-amino-acid chain: Sideroflexin-1-3 (321 aa).

5 consecutive transmembrane segments (helical) span residues Ile101–Trp121, Leu146–Val168, Leu174–Cys194, Ala220–Met240, and Ile266–Phe286.

This sequence belongs to the sideroflexin family.

The protein resides in the mitochondrion membrane. Functionally, mitochondrial amino-acid transporter that mediates transport of serine into mitochondria. This chain is Sideroflexin-1-3, found in Drosophila melanogaster (Fruit fly).